A 202-amino-acid chain; its full sequence is Imidazole glycerol phosphate synthase subunit HisH 2 (202 aa).

The Glutamine amidotransferase type-1 domain maps to 1–202 (MIVVIDYGVG…QLFKNFVELV (202 aa)). The active-site Nucleophile is C80. Catalysis depends on residues H183 and E185.

In terms of assembly, heterodimer of HisH and HisF.

It is found in the cytoplasm. It catalyses the reaction 5-[(5-phospho-1-deoxy-D-ribulos-1-ylimino)methylamino]-1-(5-phospho-beta-D-ribosyl)imidazole-4-carboxamide + L-glutamine = D-erythro-1-(imidazol-4-yl)glycerol 3-phosphate + 5-amino-1-(5-phospho-beta-D-ribosyl)imidazole-4-carboxamide + L-glutamate + H(+). The enzyme catalyses L-glutamine + H2O = L-glutamate + NH4(+). It functions in the pathway amino-acid biosynthesis; L-histidine biosynthesis; L-histidine from 5-phospho-alpha-D-ribose 1-diphosphate: step 5/9. Its function is as follows. IGPS catalyzes the conversion of PRFAR and glutamine to IGP, AICAR and glutamate. The HisH subunit catalyzes the hydrolysis of glutamine to glutamate and ammonia as part of the synthesis of IGP and AICAR. The resulting ammonia molecule is channeled to the active site of HisF. This Pseudomonas aeruginosa (strain ATCC 15692 / DSM 22644 / CIP 104116 / JCM 14847 / LMG 12228 / 1C / PRS 101 / PAO1) protein is Imidazole glycerol phosphate synthase subunit HisH 2 (hisH2).